The primary structure comprises 269 residues: Glutamate racemase (269 aa).

Residues 14 to 15 and 46 to 47 contribute to the substrate site; these read DS and YS. The Proton donor/acceptor role is filled by C78. 79 to 80 is a binding site for substrate; sequence NT. Residue C189 is the Proton donor/acceptor of the active site. 190-191 provides a ligand contact to substrate; the sequence is TH.

The protein belongs to the aspartate/glutamate racemases family.

The enzyme catalyses L-glutamate = D-glutamate. Its pathway is cell wall biogenesis; peptidoglycan biosynthesis. Functionally, provides the (R)-glutamate required for cell wall biosynthesis. The polypeptide is Glutamate racemase (Haemophilus influenzae (strain 86-028NP)).